Reading from the N-terminus, the 194-residue chain is Thymidylate kinase (194 aa).

Residue G7–S14 coordinates ATP.

Belongs to the thymidylate kinase family.

The enzyme catalyses dTMP + ATP = dTDP + ADP. Its function is as follows. Phosphorylation of dTMP to form dTDP in both de novo and salvage pathways of dTTP synthesis. In Campylobacter lari (strain RM2100 / D67 / ATCC BAA-1060), this protein is Thymidylate kinase.